Reading from the N-terminus, the 157-residue chain is 2-C-methyl-D-erythritol 2,4-cyclodiphosphate synthase (157 aa).

Residues Asp-8 and His-10 each contribute to the a divalent metal cation site. Residues 8–10 and 34–35 each bind 4-CDP-2-C-methyl-D-erythritol 2-phosphate; these read DVH and HS. An a divalent metal cation-binding site is contributed by His-42. 4-CDP-2-C-methyl-D-erythritol 2-phosphate is bound by residues 56 to 58, 132 to 135, and Arg-142; these read DIG and TTNE.

The protein belongs to the IspF family. As to quaternary structure, homotrimer. A divalent metal cation is required as a cofactor.

It carries out the reaction 4-CDP-2-C-methyl-D-erythritol 2-phosphate = 2-C-methyl-D-erythritol 2,4-cyclic diphosphate + CMP. It functions in the pathway isoprenoid biosynthesis; isopentenyl diphosphate biosynthesis via DXP pathway; isopentenyl diphosphate from 1-deoxy-D-xylulose 5-phosphate: step 4/6. Functionally, involved in the biosynthesis of isopentenyl diphosphate (IPP) and dimethylallyl diphosphate (DMAPP), two major building blocks of isoprenoid compounds. Catalyzes the conversion of 4-diphosphocytidyl-2-C-methyl-D-erythritol 2-phosphate (CDP-ME2P) to 2-C-methyl-D-erythritol 2,4-cyclodiphosphate (ME-CPP) with a corresponding release of cytidine 5-monophosphate (CMP). The chain is 2-C-methyl-D-erythritol 2,4-cyclodiphosphate synthase from Pelodictyon phaeoclathratiforme (strain DSM 5477 / BU-1).